The chain runs to 193 residues: Ancillary SecYEG translocon subunit (193 aa).

The Cytoplasmic segment spans residues 1 to 11; sequence MIKNSYINEKL. A helical membrane pass occupies residues 12-34; it reads NFYQKSFLTCMLLIVIVIVYFFS. Topologically, residues 35–193 are extracellular; sequence KNYLDKPKNS…IIQMKINNYN (159 aa).

It belongs to the YfgM family. In terms of assembly, interacts with the Sec translocon. Forms a complex with PpiD.

Its subcellular location is the cell membrane. Its function is as follows. May mediate protein transfer from the Sec translocon to the chaperone network via its extracellular C-terminal region. In Buchnera aphidicola subsp. Baizongia pistaciae (strain Bp), this protein is Ancillary SecYEG translocon subunit.